Here is a 74-residue protein sequence, read N- to C-terminus: UPF0346 protein RBAM_019500 (74 aa).

Belongs to the UPF0346 family.

The protein is UPF0346 protein RBAM_019500 of Bacillus velezensis (strain DSM 23117 / BGSC 10A6 / LMG 26770 / FZB42) (Bacillus amyloliquefaciens subsp. plantarum).